The primary structure comprises 610 residues: UvrABC system protein C (610 aa).

One can recognise a GIY-YIG domain in the interval 16–94 (SQPGVYRMYD…IKLYQPRYNV (79 aa)). Residues 204–239 (DQVLTQLISRMETASQNLEFEEAARIRDQIQAVRRV) form the UVR domain.

This sequence belongs to the UvrC family. Interacts with UvrB in an incision complex.

It localises to the cytoplasm. In terms of biological role, the UvrABC repair system catalyzes the recognition and processing of DNA lesions. UvrC both incises the 5' and 3' sides of the lesion. The N-terminal half is responsible for the 3' incision and the C-terminal half is responsible for the 5' incision. The polypeptide is UvrABC system protein C (Escherichia coli O139:H28 (strain E24377A / ETEC)).